A 176-amino-acid polypeptide reads, in one-letter code: Flavodoxin (176 aa).

One can recognise a Flavodoxin-like domain in the interval 4–165; that stretch reads IGIFFGSDTG…RVEKWVKQVA (162 aa).

Belongs to the flavodoxin family. Requires FMN as cofactor.

Low-potential electron donor to a number of redox enzymes. The chain is Flavodoxin (fldA) from Klebsiella pneumoniae.